The primary structure comprises 69 residues: Cytochrome b-c1 complex subunit 6 (69 aa).

Disulfide bonds link Cys17–Cys59 and Cys31–Cys45.

This sequence belongs to the UQCRH/QCR6 family. Component of the ubiquinol-cytochrome c oxidoreductase (cytochrome b-c1 complex, complex III, CIII), a multisubunit enzyme composed of 3 respiratory subunits cytochrome b, cytochrome c1 and Rieske protein, 2 core protein subunits, and additional low-molecular weight protein subunits. The complex exists as an obligatory dimer and forms supercomplexes (SCs) in the inner mitochondrial membrane with cytochrome c oxidase (complex IV, CIV).

It is found in the mitochondrion inner membrane. Component of the ubiquinol-cytochrome c oxidoreductase, a multisubunit transmembrane complex that is part of the mitochondrial electron transport chain which drives oxidative phosphorylation. The respiratory chain contains 3 multisubunit complexes succinate dehydrogenase (complex II, CII), ubiquinol-cytochrome c oxidoreductase (cytochrome b-c1 complex, complex III, CIII) and cytochrome c oxidase (complex IV, CIV), that cooperate to transfer electrons derived from NADH and succinate to molecular oxygen, creating an electrochemical gradient over the inner membrane that drives transmembrane transport and the ATP synthase. The cytochrome b-c1 complex catalyzes electron transfer from ubiquinol to cytochrome c, linking this redox reaction to translocation of protons across the mitochondrial inner membrane, with protons being carried across the membrane as hydrogens on the quinol. In the process called Q cycle, 2 protons are consumed from the matrix, 4 protons are released into the intermembrane space and 2 electrons are passed to cytochrome c. The sequence is that of Cytochrome b-c1 complex subunit 6 from Solanum tuberosum (Potato).